The chain runs to 484 residues: UDP-N-acetylmuramate--L-alanine ligase (484 aa).

122–128 (GTHGKTT) is an ATP binding site.

Belongs to the MurCDEF family.

It is found in the cytoplasm. It carries out the reaction UDP-N-acetyl-alpha-D-muramate + L-alanine + ATP = UDP-N-acetyl-alpha-D-muramoyl-L-alanine + ADP + phosphate + H(+). It participates in cell wall biogenesis; peptidoglycan biosynthesis. Its function is as follows. Cell wall formation. In Mycobacterium sp. (strain JLS), this protein is UDP-N-acetylmuramate--L-alanine ligase.